The following is a 260-amino-acid chain: 3beta-hydroxysteroid dehydrogenase 2 (260 aa).

Residues Asp43, 69-70 (DV), Asn96, Tyr163, and Lys167 each bind NAD(+). The active-site Proton acceptor is the Tyr163.

The protein belongs to the short-chain dehydrogenases/reductases (SDR) family.

It catalyses the reaction 3-oxo-5beta-cholan-24-oate + NADH + H(+) = isolithocholate + NAD(+). The enzyme catalyses 12alpha-hydroxy-3-oxo-5beta-cholan-24-oate + NADH + H(+) = isodeoxycholate + NAD(+). The catalysed reaction is 12alpha-hydroxy-3-oxo-5beta-cholan-24-oate + NADPH + H(+) = isodeoxycholate + NADP(+). It carries out the reaction 7alpha,12alpha-dihydroxy-3-oxo-5beta-cholan-24-oate + NADH + H(+) = isocholate + NAD(+). It catalyses the reaction 3-oxochenodeoxycholate + NADH + H(+) = isochenodeoxycholate + NAD(+). In terms of biological role, involved in the modification of secondary bile acids into iso-bile acids (3beta-bile acids) via epimerization of the 3-OH group through a 3-oxo-intermediate. Catalyzes the reduction of 12-alpha-hydroxy-3-oxo-5-beta-cholan-24-oate (3-oxo-DCA) and 3-oxo-5-beta-cholan-24-oate (3-oxo-LCA) to yield isodeoxycholate (isoDCA) and isolithocholate (isoLCA), respectively. Is also able to catalyze the reduction of 3-dehydrocholate (3-oxo-CA or 7alpha,12alpha-dihydroxy-3-oxo-5beta-cholan-24-oate) and 7-alpha-hydroxy-3-oxo-5-beta-cholan-24-oate (3-oxo-CDCA), into isocholate (isoCA) and isochenodeoxycholate (isoCDCA), respectively. Accepts both NADH and NADPH as cosubstrates. The conversion of the abundant bile acid deoxycholate (DCA) into isoDCA by the gut bacterium E.lenta favors the growth of the keystone commensal genus Bacteroides, since isoDCA is less cytotoxic than its parent compound, DCA; iso-bile acids have thus a potential role in modulating gut community composition. This Eggerthella lenta (strain ATCC 25559 / DSM 2243 / CCUG 17323 / JCM 9979 / KCTC 3265 / NCTC 11813 / VPI 0255 / 1899 B) (Eubacterium lentum) protein is 3beta-hydroxysteroid dehydrogenase 2.